Consider the following 465-residue polypeptide: MTQRVRTRFAPSPTGFIHLGNIRSALYPWAFARKMKGDFILRIEDTDVERSSQEAVDVILEAMDWLDMDIDEGPFYQMQRMDRYRAVVAQMVQQELAYPCYMSTEELDALREAQRERGEKPRYDGTWRPAPGKILPPPPAGVQPVIRFKNPIGGSVVWDDAVKGRIEISNDELDDLVIARPDGTPTYNFCVVVDDMDMQITHVIRGDDHVNNTPRQINILRALGGTPPVYAHLPTVLNEQGEKMSKRHGAMAVTGYRDAGYLPEAIVNYLARLGWAHGDAEIFSREQFIEWFDLEHLGKSPAQYNPEKLAWLNNHYIKQADNVRLAGLVKPFIEALGGKVDGGPVLADVVALVKDRANTLREVAQTALLFYRSDLAVEPELAAQHLTDDVRPGIAALAEKLGALPEWKREAIGAVFKEVLAAHGWKMPKLAMPVRLLVAGQLQTPSIDAVLELFGRDVVLHRLAA.

A 'HIGH' region motif is present at residues 11–21; sequence PSPTGFIHLGN. Residues 118 to 139 form a disordered region; that stretch reads GEKPRYDGTWRPAPGKILPPPP. The short motif at 243 to 247 is the 'KMSKS' region element; it reads KMSKR. ATP is bound at residue lysine 246.

Belongs to the class-I aminoacyl-tRNA synthetase family. Glutamate--tRNA ligase type 1 subfamily. Monomer.

Its subcellular location is the cytoplasm. The enzyme catalyses tRNA(Glu) + L-glutamate + ATP = L-glutamyl-tRNA(Glu) + AMP + diphosphate. Functionally, catalyzes the attachment of glutamate to tRNA(Glu) in a two-step reaction: glutamate is first activated by ATP to form Glu-AMP and then transferred to the acceptor end of tRNA(Glu). This is Glutamate--tRNA ligase from Ralstonia pickettii (strain 12J).